The chain runs to 481 residues: Transmembrane protein 39A (481 aa).

The next 8 helical transmembrane spans lie at 74–94, 109–129, 150–170, 182–202, 278–298, 313–333, 411–431, and 437–457; these read LFETLLLLYLLVALLVQYINI, STSLNFHLMDAHLAVFIAVML, LCYVLLLVVRVCVLTLCGWVL, SVLKLLFLGYPFGVYVPLCCL, EVLFNSLLSAYYVAFLPLCFV, LIMVWINAFVMLMSHLLPPHY, LLNVLIGIECSVVVYQLYSLL, and NHTLSLGLILVCNYYVLFKLL.

This sequence belongs to the TMEM39 family.

The protein resides in the endoplasmic reticulum membrane. Functionally, regulates autophagy by controlling the spatial distribution and levels of the intracellular phosphatidylinositol 4-phosphate (PtdIns(4)P) pools. Modulates (PtdIns(4)P) levels by regulating the ER-to-Golgi trafficking of the phosphatidylinositide phosphatase SACM1L. The polypeptide is Transmembrane protein 39A (tmem39a) (Danio rerio (Zebrafish)).